The chain runs to 241 residues: Small ribosomal subunit protein uS2 (241 aa).

Belongs to the universal ribosomal protein uS2 family.

The chain is Small ribosomal subunit protein uS2 from Salmonella choleraesuis (strain SC-B67).